Reading from the N-terminus, the 425-residue chain is Serine hydroxymethyltransferase 2 (425 aa).

(6S)-5,6,7,8-tetrahydrofolate contacts are provided by residues L121 and 125 to 127 (GHL). K230 is subject to N6-(pyridoxal phosphate)lysine.

Belongs to the SHMT family. As to quaternary structure, homodimer. Pyridoxal 5'-phosphate serves as cofactor.

Its subcellular location is the cytoplasm. It catalyses the reaction (6R)-5,10-methylene-5,6,7,8-tetrahydrofolate + glycine + H2O = (6S)-5,6,7,8-tetrahydrofolate + L-serine. It functions in the pathway one-carbon metabolism; tetrahydrofolate interconversion. The protein operates within amino-acid biosynthesis; glycine biosynthesis; glycine from L-serine: step 1/1. Functionally, catalyzes the reversible interconversion of serine and glycine with tetrahydrofolate (THF) serving as the one-carbon carrier. This reaction serves as the major source of one-carbon groups required for the biosynthesis of purines, thymidylate, methionine, and other important biomolecules. Also exhibits THF-independent aldolase activity toward beta-hydroxyamino acids, producing glycine and aldehydes, via a retro-aldol mechanism. This is Serine hydroxymethyltransferase 2 from Mycobacterium bovis (strain ATCC BAA-935 / AF2122/97).